The primary structure comprises 541 residues: Chaperonin GroEL 2 (541 aa).

Residues 29 to 32 (TLGP) and 86 to 90 (DGTTT) each bind ATP. Residue Lys-132 forms an Isoglutamyl lysine isopeptide (Lys-Gln) (interchain with Q-Cter in protein Pup) linkage. ATP is bound by residues Gly-413, 476-478 (NAA), and Asp-492.

Belongs to the chaperonin (HSP60) family. Forms a cylinder of 14 subunits composed of two heptameric rings stacked back-to-back. Interacts with the co-chaperonin GroES.

It localises to the secreted. Its subcellular location is the capsule. It is found in the cell surface. The protein localises to the cell wall. The catalysed reaction is ATP + H2O + a folded polypeptide = ADP + phosphate + an unfolded polypeptide.. Together with its co-chaperonin GroES, plays an essential role in assisting protein folding. The GroEL-GroES system forms a nano-cage that allows encapsulation of the non-native substrate proteins and provides a physical environment optimized to promote and accelerate protein folding. The protein is Chaperonin GroEL 2 of Mycolicibacterium smegmatis (strain ATCC 700084 / mc(2)155) (Mycobacterium smegmatis).